A 1109-amino-acid chain; its full sequence is RNA2 polyprotein (1109 aa).

Belongs to the nepoviruses RNA2 polyprotein family. Post-translationally, specific enzymatic cleavages in vivo by the P1 encoded 3C-like protease yield mature proteins.

The protein resides in the host cell junction. Its subcellular location is the host plasmodesma. The protein localises to the host cytoplasm. It localises to the host nucleus. It is found in the virion. Functionally, implicated in RNA2 replication. Could also be required for nematode transmission of the virus. In terms of biological role, transports viral genome to neighboring plant cells directly through plasmosdesmata, without any budding. The movement protein allows efficient cell to cell propagation, by bypassing the host cell wall barrier. Acts by forming a tubular structure at the host plasmodesmata, enlarging it enough to allow free passage of virion capsids. In Vitis rupestris (Grape), this protein is RNA2 polyprotein.